A 1150-amino-acid polypeptide reads, in one-letter code: Fl(2)d-associated complex component (1150 aa).

The segment covering 1–10 (MEKKAKESLR) has biased composition (basic and acidic residues). 4 disordered regions span residues 1–444 (MEKK…EEER), 477–710 (QGRE…PPPL), 833–914 (ASED…MDTN), and 1034–1053 (KEQGQQRELDGDEEPPAKIP). Residues 11 to 20 (RYKKAARHSA) show a composition bias toward basic residues. Positions 21-44 (THSSSSDSTSDSDSGSSSYSSTDS) are enriched in low complexity. Residues 47–69 (GVGGVGVGVGVPGGAGGPGGSGS) are compositionally biased toward gly residues. Basic residues predominate over residues 72 to 97 (GHPHTHGHGHHPRSAERHHRKKKSSR). Residues 98–107 (RGGSSSGDEP) are compositionally biased toward low complexity. Composition is skewed to basic residues over residues 110–144 (SRRKRDKRDHVQKKLVAKRNHIKRKLKEARLKKRA) and 162–175 (AKLKKLAERKRLRA). The stretch at 122 to 147 (KKLVAKRNHIKRKLKEARLKKRAAAA) forms a coiled coil. A compositionally biased stretch (basic and acidic residues) spans 176–199 (ASKEQRERDKLRVVQRDRERDHHR). Low complexity predominate over residues 202 to 215 (SSRSPPSSSTTTTT). The stretch at 269-347 (PSLERERERE…KLRRQEEEEG (79 aa)) forms a coiled coil. Composition is skewed to basic and acidic residues over residues 270 to 414 (SLER…DEMR), 428 to 444 (YAPRLRDPRELYSEEER), and 492 to 529 (PDERERLIRDRERDRERERDRERERNIGPRGDFRPEWE). The segment covering 537-558 (AGGGPGGPSGTPGRPGGFVGGP) has biased composition (gly residues). 2 stretches are compositionally biased toward basic and acidic residues: residues 589-611 (ERERERERERDRERERDREDRPD) and 630-640 (WLEHDQREKPR). The span at 660–669 (PPAPSHPHPA) shows a compositional bias: pro residues. Residues 693–702 (GHGDHGERPG) show a composition bias toward basic and acidic residues. Over residues 851-861 (QSLNLNQSLSS) the composition is skewed to low complexity. The span at 879 to 889 (ELSEISDSDDD) shows a compositional bias: acidic residues. The span at 890–903 (ILNKTDKVRPKNEL) shows a compositional bias: basic and acidic residues. Residues 905 to 914 (TETEQEMDTN) are compositionally biased toward acidic residues.

Belongs to the ZC3H13 family. In terms of assembly, component of the WMM complex, a N6-methyltransferase complex composed of a catalytic subcomplex, named MAC, and of an associated subcomplex, named MACOM. The MAC subcomplex is composed of Ime4/Mettl3 and Mettl14. The MACOM subcomplex is composed of fl(2)d, Flacc/Xio, Hakai, vir, and, in some cases of nito. Widely expressed during embryogenesis but shows enrichment in the neuroectoderm.

The protein localises to the nucleus. Its function is as follows. Associated component of the WMM complex, a complex that mediates N6-methyladenosine (m6A) methylation of mRNAs, a modification that plays a role in the efficiency of mRNA splicing and is required for sex determination. In the WMM complex, acts as a key regulator of m6A methylation by bridging fl(2)d to the RNA-binding component nito. Required for sex determination and dosage compensation via Sxl alternative splicing: m6A methylation acts as a key regulator of Sxl pre-mRNA and promotes female-specific alternative splicing of Sxl, which determines female physiognomy. The chain is Fl(2)d-associated complex component from Drosophila melanogaster (Fruit fly).